A 501-amino-acid chain; its full sequence is Solute carrier family 2, facilitated glucose transporter member 5 (501 aa).

M1 carries the N-acetylmethionine modification. The Cytoplasmic segment spans residues 1 to 18 (MEQQDQSMKEGRLTLVLA). Residues 19 to 39 (LATLIAAFGSSFQYGYNVAAV) traverse the membrane as a helical segment. Y32 contributes to the D-fructose binding site. Residues 40 to 68 (NSPALLMQQFYNETYYGRTGEFMEDFPLT) lie on the Extracellular side of the membrane. N51 is a glycosylation site (N-linked (GlcNAc...) asparagine). The helical transmembrane segment at 69–91 (LLWSVTVSMFPFGGFIGSLLVGP) threads the bilayer. Residues 92–98 (LVNKFGR) lie on the Cytoplasmic side of the membrane. A helical transmembrane segment spans residues 99–119 (KGALLFNNIFSIVPAILMGCS). Residues 120–126 (RVATSFE) are Extracellular-facing. A helical transmembrane segment spans residues 127–149 (LIIISRLLVGICAGVSSNVVPMY). At 150–161 (LGELAPKNLRGA) the chain is on the cytoplasmic side. Residues 162–182 (LGVVPQLFITVGILVAQIFGL) form a helical membrane-spanning segment. Q167 lines the D-fructose pocket. Residues 183–192 (RNLLANVDGW) lie on the Extracellular side of the membrane. The chain crosses the membrane as a helical span at residues 193 to 213 (PILLGLTGVPAALQLLLLPFF). Residues 214 to 277 (PESPRYLLIQ…LFRMRSLRWQ (64 aa)) lie on the Cytoplasmic side of the membrane. A helical transmembrane segment spans residues 278-298 (LLSIIVLMGGQQLSGVNAIYY). D-fructose-binding positions include Q288 and 296-298 (IYY). Over 299-313 (YADQIYLSAGVPEEH) the chain is Extracellular. A helical membrane pass occupies residues 314 to 334 (VQYVTAGTGAVNVVMTFCAVF). The Cytoplasmic segment spans residues 335–342 (VVELLGRR). The chain crosses the membrane as a helical span at residues 343 to 363 (LLLLLGFSICLIACCVLTAAL). The Extracellular segment spans residues 364–371 (ALQDTVSW). The helical transmembrane segment at 372 to 394 (MPYISIVCVISYVIGHALGPSPI) threads the bilayer. H387 contributes to the D-fructose binding site. Residues 395 to 412 (PALLITEIFLQSSRPSAF) lie on the Cytoplasmic side of the membrane. The chain crosses the membrane as a helical span at residues 413 to 433 (MVGGSVHWLSNFTVGLIFPFI). 419-420 (HW) serves as a coordination point for D-fructose. Over 434-439 (QEGLGP) the chain is Extracellular. Residues 440-460 (YSFIVFAVICLLTTIYIFLIV) traverse the membrane as a helical segment. The Cytoplasmic portion of the chain corresponds to 461–501 (PETKAKTFIEINQIFTKMNKVSEVYPEKEELKELPPVTSEQ).

In terms of tissue distribution, detected in skeletal muscle, and in jejunum brush border membrane and basolateral membrane (at protein level). Expressed in small intestine, and at much lower levels in kidney, skeletal muscle, and adipose tissue.

Its subcellular location is the apical cell membrane. It localises to the cell membrane. It is found in the sarcolemma. The enzyme catalyses D-fructose(out) = D-fructose(in). With respect to regulation, the uptake of 2-deoxyglucose is inhibited by cytochalasin B. Fructose transport is inhibited by the flavonoids epigallocatechin gallate and apigenin but not quercetin. Functions as a fructose transporter that has only low activity with other monosaccharides. Can mediate the uptake of 2-deoxyglucose, but with low efficiency. Essential for fructose uptake in the small intestine. Plays a role in the regulation of salt uptake and blood pressure in response to dietary fructose. Required for the development of high blood pressure in response to high dietary fructose intake. The chain is Solute carrier family 2, facilitated glucose transporter member 5 from Homo sapiens (Human).